The sequence spans 328 residues: Ribosomal protein L11 methyltransferase (328 aa).

S-adenosyl-L-methionine-binding residues include threonine 153, glycine 174, aspartate 196, and asparagine 263.

The protein belongs to the methyltransferase superfamily. PrmA family.

It localises to the cytoplasm. The catalysed reaction is L-lysyl-[protein] + 3 S-adenosyl-L-methionine = N(6),N(6),N(6)-trimethyl-L-lysyl-[protein] + 3 S-adenosyl-L-homocysteine + 3 H(+). Methylates ribosomal protein L11. The sequence is that of Ribosomal protein L11 methyltransferase from Chloroflexus aurantiacus (strain ATCC 29366 / DSM 635 / J-10-fl).